The primary structure comprises 92 residues: AMSDMELRQCLPCGPGGKGRCFGPSICCGEELGCFVGTAEALRCQEENYLPSPCQSGQKPCGSGGRCAAAGICCYEESCVTEPECREGAGIH.

Intrachain disulfides connect Cys-10–Cys-54, Cys-13–Cys-27, Cys-21–Cys-44, Cys-28–Cys-34, Cys-61–Cys-73, Cys-67–Cys-85, and Cys-74–Cys-79.

It belongs to the vasopressin/oxytocin family. As to quaternary structure, there is an equilibrium between the monomeric and dimeric forms. On peptide binding the dimeric form predominates. In terms of processing, a shorter neurophysin molecule (1-90) also exists and is probably derived from the complete protein by proteolytic degradation (in vivo or after extraction).

It is found in the secreted. Functionally, neurophysin 2 specifically binds vasopressin. The polypeptide is Neurophysin 2 (AVP) (Loxodonta africana (African elephant)).